A 383-amino-acid chain; its full sequence is Succinate--CoA ligase [ADP-forming] subunit beta 2 (383 aa).

Residues 9–231 (RELFKEHGIV…QEDADSLEAR (223 aa)) form the ATP-grasp domain. Residues K45, 52-54 (GRG), C94, and E99 contribute to the ATP site. Mg(2+) is bound by residues N187 and D201. Residues N251 and 308–310 (GIT) contribute to the substrate site.

Belongs to the succinate/malate CoA ligase beta subunit family. Heterotetramer of two alpha and two beta subunits. Mg(2+) is required as a cofactor.

The catalysed reaction is succinate + ATP + CoA = succinyl-CoA + ADP + phosphate. The enzyme catalyses GTP + succinate + CoA = succinyl-CoA + GDP + phosphate. It functions in the pathway carbohydrate metabolism; tricarboxylic acid cycle; succinate from succinyl-CoA (ligase route): step 1/1. In terms of biological role, succinyl-CoA synthetase functions in the citric acid cycle (TCA), coupling the hydrolysis of succinyl-CoA to the synthesis of either ATP or GTP and thus represents the only step of substrate-level phosphorylation in the TCA. The beta subunit provides nucleotide specificity of the enzyme and binds the substrate succinate, while the binding sites for coenzyme A and phosphate are found in the alpha subunit. The polypeptide is Succinate--CoA ligase [ADP-forming] subunit beta 2 (Streptomyces coelicolor (strain ATCC BAA-471 / A3(2) / M145)).